We begin with the raw amino-acid sequence, 119 residues long: uncharacterized protein (119 aa).

2 consecutive transmembrane segments (helical) span residues 53–73 (AATI…SFLA) and 92–112 (FITH…WFLF).

It localises to the membrane. This is an uncharacterized protein from Saccharomyces cerevisiae (strain ATCC 204508 / S288c) (Baker's yeast).